We begin with the raw amino-acid sequence, 344 residues long: Methionine import ATP-binding protein MetN (344 aa).

The 240-residue stretch at 2–241 folds into the ABC transporter domain; that stretch reads IELKNIGKQF…PTTQLAQQFI (240 aa). Residue 38–45 coordinates ATP; it reads GASGAGKS.

This sequence belongs to the ABC transporter superfamily. Methionine importer (TC 3.A.1.24) family. The complex is composed of two ATP-binding proteins (MetN), two transmembrane proteins (MetI) and a solute-binding protein (MetQ).

The protein localises to the cell inner membrane. It catalyses the reaction L-methionine(out) + ATP + H2O = L-methionine(in) + ADP + phosphate + H(+). The catalysed reaction is D-methionine(out) + ATP + H2O = D-methionine(in) + ADP + phosphate + H(+). In terms of biological role, part of the ABC transporter complex MetNIQ involved in methionine import. Responsible for energy coupling to the transport system. The sequence is that of Methionine import ATP-binding protein MetN from Haemophilus ducreyi (strain 35000HP / ATCC 700724).